A 362-amino-acid chain; its full sequence is Probable prephenate dehydrogenase NovF (362 aa).

In terms of domain architecture, Prephenate/arogenate dehydrogenase spans 2-283 (RTAVIIGTGM…GIDGSNRVPG (282 aa)).

Belongs to the prephenate/arogenate dehydrogenase family.

The catalysed reaction is prephenate + NAD(+) = 3-(4-hydroxyphenyl)pyruvate + CO2 + NADH. It participates in antibiotic biosynthesis; novobiocin biosynthesis. Its function is as follows. Probable prephenate dehydrogenase that produces 4-hydroxyphenylpyruvate (4HPP) in the novobiocin biosynthesis pathway. Novobiocin is an aminocoumarin family antibiotic that targets bacterial DNA gyrases. This is Probable prephenate dehydrogenase NovF (novF) from Streptomyces niveus (Streptomyces spheroides).